The following is an 857-amino-acid chain: Dimethylglycine dehydrogenase, mitochondrial (857 aa).

The transit peptide at 1–43 (MLRLGALRLRGLALRSSQGRPSSAGLREGQESPPSPPEWKDRA) directs the protein to the mitochondrion. Residues 15–39 (RSSQGRPSSAGLREGQESPPSPPEW) form a disordered region. FAD-binding positions include 52 to 53 (CV), 73 to 74 (EK), and 80 to 88 (GSTWHAAGL). His-84 is modified (tele-8alpha-FAD histidine). The residue at position 107 (Lys-107) is an N6-acetyllysine. Lys-141 carries the N6-acetyllysine; alternate modification. At Lys-141 the chain carries N6-succinyllysine; alternate. Residue Lys-161 is modified to N6-acetyllysine. Val-212 contacts FAD. Position 216 is an N6-acetyllysine (Lys-216). Trp-244 lines the FAD pocket. An N6-succinyllysine mark is found at Lys-310 and Lys-312. N6-acetyllysine occurs at positions 328 and 353. 390-395 (FGYGII) provides a ligand contact to FAD. N6-acetyllysine; alternate occurs at positions 427, 469, and 516. 3 positions are modified to N6-succinyllysine; alternate: Lys-427, Lys-469, and Lys-516. A (6S)-5,6,7,8-tetrahydrofolate-binding site is contributed by 573 to 575 (ELT). Lys-648 carries the post-translational modification N6-acetyllysine; alternate. Lys-648 is subject to N6-succinyllysine; alternate. (6S)-5,6,7,8-tetrahydrofolate-binding positions include Tyr-669, 676 to 678 (ELY), and Tyr-737. N6-acetyllysine is present on Lys-757. Lys-786 is modified (N6-acetyllysine; alternate). Lys-786 carries the N6-succinyllysine; alternate modification. An N6-succinyllysine modification is found at Lys-788.

The protein belongs to the GcvT family. FAD serves as cofactor.

The protein resides in the mitochondrion. The catalysed reaction is (6S)-5,6,7,8-tetrahydrofolyl-(gamma-L-Glu)(n) + N,N-dimethylglycine + oxidized [electron-transfer flavoprotein] + H(+) = (6R)-5,10-methylenetetrahydrofolyl-(gamma-L-Glu)(n) + sarcosine + reduced [electron-transfer flavoprotein]. Its pathway is amine and polyamine degradation; betaine degradation; sarcosine from betaine: step 2/2. Its function is as follows. Catalyzes the demethylation of N,N-dimethylglycine to sarcosine. Also has activity with sarcosine in vitro. The chain is Dimethylglycine dehydrogenase, mitochondrial (Dmgdh) from Rattus norvegicus (Rat).